A 204-amino-acid chain; its full sequence is FlaA locus 22.9 kDa protein (204 aa).

The interval 115–140 is disordered; sequence EKTAEDQKKSSEDHTEGSADSKASSE.

The polypeptide is FlaA locus 22.9 kDa protein (ylxF) (Bacillus subtilis (strain 168)).